Consider the following 723-residue polypeptide: Preterminal protein (723 aa).

A Nuclear localization signal motif is present at residues 453–462; it reads RLPMRRRRRR. The segment at 457–492 is disordered; sequence RRRRRRAPPPPPMSEELSEPEVEAFPPASPPRRSFE. An O-(5'-phospho-DNA)-serine modification is found at Ser651.

It belongs to the adenoviridae terminal protein family. As to quaternary structure, heterodimer with the polymerase; this heterodimer binds to bp 9 to 18 of the genome. Interacts with host POU2F1; POU2F1 binds to the auxiliary sequences in the inverted terminal repeats and tethers the pTP-POL heterodimer to the origin DNA thereby participating in the assembly of the pre-initiation complex (POL-TP-DBP-NFIA-POU2F1). Post-translationally, preterminal protein is used to replicate viral genome, upon genomic encapsidation it is processed first into iTP and finally into TP by adenovirus protease.

It localises to the host nucleus matrix. Its function is as follows. Protein covalently bound to the viral DNA that acts as a primer for viral genomic replication by DNA strand displacement. Assembles on the viral origin of replication in an initiation complex with viral polymerase, DBP, host NFIA and host POU2F1/OCT1. During initiation, the polymerase covalently couples the first dCTP with Ser-580 of pTP. The terminal protein stimulates the template activity over 20 fold compared to protein-free templates. Neo-synthesized viral genomes are linked to two preterminal proteins, one for each 5' end. These new genomes are encapsidated in the nucleus, and during capsid maturation by viral protease, preterminal protein is first cleaved into intermediary (iTP), then into mature TP. May play a role in host nuclear matrix localization of genomic DNA. This Canis lupus familiaris (Dog) protein is Preterminal protein.